A 360-amino-acid polypeptide reads, in one-letter code: Photosystem II protein D1 (360 aa).

3 helical membrane-spanning segments follow: residues 29–46 (YIGW…TATS), 118–133 (HFLT…EWEL), and 142–156 (WISV…AAAA). Histidine 118 serves as a coordination point for chlorophyll a. Tyrosine 126 contributes to the pheophytin a binding site. Aspartate 170 and glutamate 189 together coordinate [CaMn4O5] cluster. The helical transmembrane segment at 197 to 218 (FHQLGVAGVFGGSLFSAMHGSL) threads the bilayer. Histidine 198 contributes to the chlorophyll a binding site. Residues histidine 215 and 264–265 (SF) each bind a quinone. Residue histidine 215 participates in Fe cation binding. Histidine 272 is a binding site for Fe cation. The helical transmembrane segment at 274 to 288 (FLGLWPVVGIWLTAL) threads the bilayer. 4 residues coordinate [CaMn4O5] cluster: histidine 332, glutamate 333, aspartate 342, and alanine 344. A propeptide spanning residues 345-360 (SGESLPVALTAPAVNG) is cleaved from the precursor.

Belongs to the reaction center PufL/M/PsbA/D family. PSII is composed of 1 copy each of membrane proteins PsbA, PsbB, PsbC, PsbD, PsbE, PsbF, PsbH, PsbI, PsbJ, PsbK, PsbL, PsbM, PsbT, PsbX, PsbY, PsbZ, Psb30/Ycf12, at least 3 peripheral proteins of the oxygen-evolving complex and a large number of cofactors. It forms dimeric complexes. It depends on The D1/D2 heterodimer binds P680, chlorophylls that are the primary electron donor of PSII, and subsequent electron acceptors. It shares a non-heme iron and each subunit binds pheophytin, quinone, additional chlorophylls, carotenoids and lipids. D1 provides most of the ligands for the Mn4-Ca-O5 cluster of the oxygen-evolving complex (OEC). There is also a Cl(-1) ion associated with D1 and D2, which is required for oxygen evolution. The PSII complex binds additional chlorophylls, carotenoids and specific lipids. as a cofactor. In terms of processing, tyr-161 forms a radical intermediate that is referred to as redox-active TyrZ, YZ or Y-Z. C-terminally processed by CTPA; processing is essential to allow assembly of the oxygen-evolving complex and thus photosynthetic growth.

It is found in the plastid. The protein resides in the chloroplast thylakoid membrane. It catalyses the reaction 2 a plastoquinone + 4 hnu + 2 H2O = 2 a plastoquinol + O2. Its function is as follows. Photosystem II (PSII) is a light-driven water:plastoquinone oxidoreductase that uses light energy to abstract electrons from H(2)O, generating O(2) and a proton gradient subsequently used for ATP formation. It consists of a core antenna complex that captures photons, and an electron transfer chain that converts photonic excitation into a charge separation. The D1/D2 (PsbA/PsbD) reaction center heterodimer binds P680, the primary electron donor of PSII as well as several subsequent electron acceptors. This Pyropia yezoensis (Susabi-nori) protein is Photosystem II protein D1.